The primary structure comprises 400 residues: Cytohesin-3 (400 aa).

Residues 14–61 (EDLSLEEREELLDIRRRKKELIDDIERLKYEIAEVMTEIDNLTSVEES) adopt a coiled-coil conformation. The region spanning 77 to 206 (FNMDPKKGIQ…IIMLNTSLHN (130 aa)) is the SEC7 domain. Residues 265–381 (PDREGWLLKL…WMKSIKASIS (117 aa)) form the PH domain. Residues 273-281 (KLGGGRVKT), arginine 285, tyrosine 296, arginine 306, and asparagine 355 contribute to the a 1,2-diacyl-sn-glycero-3-phospho-(1D-myo-inositol-3,4,5-trisphosphate) site. The interval 392–400 (RKRRIANKK) is C-terminal autoinhibitory region.

Interacts with TAMALIN. Present in all tissues tested, with highest protein levels in brain and adrenal.

It is found in the cytoplasm. The protein resides in the cytosol. It localises to the cell membrane. Promotes guanine-nucleotide exchange on ARF1. Promotes the activation of ARF factors through replacement of GDP with GTP. In Rattus norvegicus (Rat), this protein is Cytohesin-3 (Cyth3).